The sequence spans 962 residues: Glycine dehydrogenase (decarboxylating) (962 aa).

Lys-709 bears the N6-(pyridoxal phosphate)lysine mark.

The protein belongs to the GcvP family. In terms of assembly, the glycine cleavage system is composed of four proteins: P, T, L and H. The cofactor is pyridoxal 5'-phosphate.

The enzyme catalyses N(6)-[(R)-lipoyl]-L-lysyl-[glycine-cleavage complex H protein] + glycine + H(+) = N(6)-[(R)-S(8)-aminomethyldihydrolipoyl]-L-lysyl-[glycine-cleavage complex H protein] + CO2. Functionally, the glycine cleavage system catalyzes the degradation of glycine. The P protein binds the alpha-amino group of glycine through its pyridoxal phosphate cofactor; CO(2) is released and the remaining methylamine moiety is then transferred to the lipoamide cofactor of the H protein. This chain is Glycine dehydrogenase (decarboxylating), found in Shewanella sp. (strain MR-7).